A 389-amino-acid polypeptide reads, in one-letter code: Gustatory receptor for bitter taste 22e (389 aa).

Topologically, residues 1-14 (MFRPSGSGYRQKWT) are cytoplasmic. A helical transmembrane segment spans residues 15–35 (GLTLKGALYGSWILGVFPFAY). Residues 36-46 (DSWTRTLRRSK) lie on the Extracellular side of the membrane. A helical membrane pass occupies residues 47–67 (WLIAYGFVLNAAFILLVVTND). Residues 68 to 142 (TESETPLRME…SLEECISFDR (75 aa)) are Cytoplasmic-facing. The helical transmembrane segment at 143-163 (FVLYKGFSVVLELVSMLVLEL) threads the bilayer. The Extracellular segment spans residues 164 to 170 (GMSPNYS). N168 carries N-linked (GlcNAc...) asparagine glycosylation. Residues 171 to 191 (AQFFIGLGSLCLMLLAVLLGA) form a helical membrane-spanning segment. Residues 192-254 (SHFHLAVVFV…QRLASIYDYQ (63 aa)) are Cytoplasmic-facing. The chain crosses the membrane as a helical span at residues 255-275 (MVMVMVSFLIANVLGIYFFII). At 276–287 (YSISLNKSLDFK) the chain is on the extracellular side. N281 carries N-linked (GlcNAc...) asparagine glycosylation. A helical membrane pass occupies residues 288–308 (ILVFVQALVINMLDFWLNVEI). Topologically, residues 309-366 (CELAERTGRQTSTILKLFNDIENIDEKLERSITDFALFCSHRRLRFHHCGLFYVNYEM) are cytoplasmic. A helical membrane pass occupies residues 367–387 (GFRMAITSFLYLLFLIQFDYW). At 388–389 (NL) the chain is on the extracellular side.

This sequence belongs to the insect chemoreceptor superfamily. Gustatory receptor (GR) family. Gr22e subfamily. As to expression, taste bristles on the labial palp, labral and cibarial sense organs, chemosensory bristles on the leg and anterior wing margin. In larvae, is expressed in neurons of the terminal external chemosensory organ and in the dorsal pharyngeal sense organ. Neurons expressing Gr22e also express Gr66a and correspond to taste neurons that mediate sensitivity to bitter compounds.

The protein localises to the cell membrane. In terms of biological role, gustatory receptor which mediates acceptance or avoidance behavior, depending on its substrates. Seems to be involved in the sensing of bitter taste since it is expressed in neurons that mediate sensitivity to bitter compounds which are also avoidance-type taste neurons. The chain is Gustatory receptor for bitter taste 22e (Gr22e) from Drosophila melanogaster (Fruit fly).